A 38-amino-acid chain; its full sequence is Large ribosomal subunit protein bL36 (38 aa).

Belongs to the bacterial ribosomal protein bL36 family.

This Paraburkholderia phymatum (strain DSM 17167 / CIP 108236 / LMG 21445 / STM815) (Burkholderia phymatum) protein is Large ribosomal subunit protein bL36.